Reading from the N-terminus, the 855-residue chain is Lon protease (855 aa).

Residues 45–288 (IYLLTVKNVV…ETFRFLNIEY (244 aa)) enclose the Lon N-terminal domain. 439-446 (GPPGVGKT) is a binding site for ATP. The 182-residue stretch at 674–855 (IQVPGVVTGL…NEVIDLSIIK (182 aa)) folds into the Lon proteolytic domain. Catalysis depends on residues serine 761 and lysine 804.

Belongs to the peptidase S16 family. As to quaternary structure, homohexamer. Organized in a ring with a central cavity.

It localises to the cytoplasm. The enzyme catalyses Hydrolysis of proteins in presence of ATP.. Functionally, ATP-dependent serine protease that mediates the selective degradation of mutant and abnormal proteins as well as certain short-lived regulatory proteins. Required for cellular homeostasis and for survival from DNA damage and developmental changes induced by stress. Degrades polypeptides processively to yield small peptide fragments that are 5 to 10 amino acids long. Binds to DNA in a double-stranded, site-specific manner. This is Lon protease from Karelsulcia muelleri (strain GWSS) (Sulcia muelleri).